A 2033-amino-acid polypeptide reads, in one-letter code: Major viral transcription factor ICP4 homolog (2033 aa).

Residues 1–16 (MFWHQPRQQQLRQLQR) show a composition bias toward low complexity. 17 disordered regions span residues 1-47 (MFWH…PPSP), 95-145 (FSDP…LPAP), 157-199 (LSSS…GSSY), 218-240 (PPRSVPDCRRGEPVSEDGMADRC), 277-301 (DQSPRGLGAEPHVAEAGRPSSCVGE), 313-338 (EERKEAARRSPDAERNDDEEEYESLP), 350-461 (AEIN…GAVA), 505-527 (SFAQRQQPRQQQHAPRNKPARQR), 719-747 (LPPDGGDDRDGGGKSRGGRGGGSKDASRT), 1015-1064 (GKQS…GALN), 1085-1186 (LLSD…PGDP), 1294-1342 (ETWR…EGGT), 1420-1451 (ASPHRGVGGKHRDKRPCLAEGTPSAPSCRDAA), 1531-1612 (VVFP…PPAA), 1636-1655 (RFDEADGEDPLPPAACGGKP), 1664-1718 (LCEQ…SPSP), and 1746-2033 (EISP…GTER). Positions 157-173 (LSSSSPSGSSRGSVTSP) are enriched in low complexity. A compositionally biased stretch (basic and acidic residues) spans 223 to 240 (PDCRRGEPVSEDGMADRC). A compositionally biased stretch (basic and acidic residues) spans 313 to 326 (EERKEAARRSPDAE). Over residues 359 to 368 (ESDEAEDEDA) the composition is skewed to acidic residues. Positions 507–518 (AQRQQPRQQQHA) are enriched in low complexity. The segment covering 732 to 741 (KSRGGRGGGS) has biased composition (gly residues). A compositionally biased stretch (low complexity) spans 1031-1056 (RATASSPRTPASRPPHGSAAAPPSGR). The segment covering 1086-1097 (LSDEAGTDDDGD) has biased composition (acidic residues). Residues 1169 to 1181 (SSSSFASSSLASA) are compositionally biased toward low complexity. The segment covering 1294–1303 (ETWRDAEDHP) has biased composition (basic and acidic residues). The segment covering 1575–1591 (SHDRSPSSSSRRRDGRP) has biased composition (basic and acidic residues). Over residues 1592-1602 (SSRRRPSRRMS) the composition is skewed to basic residues. 2 stretches are compositionally biased toward basic and acidic residues: residues 1752 to 1765 (RRRDAEGRRFGCRQ) and 1774 to 1795 (EGGRESPERVLGRRQSRRDSVP). Positions 1812-1843 (SAGRSSSSSSSSSSSSSSSPSSRPSRSATPSL) are enriched in low complexity. Residues 1853-1869 (APVDRSRSGRRRERDRP) are compositionally biased toward basic and acidic residues. The segment covering 1912 to 1921 (TPSSATTLPS) has biased composition (polar residues). Residues 1927–1936 (DSVDETETED) show a composition bias toward acidic residues. Low complexity predominate over residues 1937–1948 (SAPPARLAPSPL).

It belongs to the herpesviridae ICP4 family. Post-translationally, a long stretch of serine residues may be a major site of phosphorylation.

The protein resides in the host nucleus. This IE protein is a multifunctional protein capable of migrating to the nucleus, binding to DNA, trans-activating other viral genes, and autoregulating its own synthesis. It is required for the switch from immediate-early to early mode of gene expression. This Amazona oratrix (yellow-headed parrot) protein is Major viral transcription factor ICP4 homolog (ICP4B).